Reading from the N-terminus, the 110-residue chain is uncharacterized protein (110 aa).

Transmembrane regions (helical) follow at residues 21-41 (IQLA…PQIC) and 63-83 (PSMI…IIVV).

The protein resides in the membrane. This is an uncharacterized protein from Saccharomyces cerevisiae (strain ATCC 204508 / S288c) (Baker's yeast).